Here is a 515-residue protein sequence, read N- to C-terminus: Galactose/methyl galactoside import ATP-binding protein MglA (515 aa).

2 ABC transporter domains span residues 8–243 and 254–499; these read LEMR…VGRE and IPKE…AKYL. 40-47 serves as a coordination point for ATP; sequence GENGAGKS.

Belongs to the ABC transporter superfamily. Galactose/methyl galactoside importer (TC 3.A.1.2.3) family. In terms of assembly, the complex is composed of one ATP-binding protein (MglA), two transmembrane proteins (MglC) and a solute-binding protein (MglB).

The protein localises to the cell membrane. It carries out the reaction D-galactose(out) + ATP + H2O = D-galactose(in) + ADP + phosphate + H(+). It catalyses the reaction methyl beta-D-galactoside(out) + ATP + H2O = methyl beta-D-galactoside(in) + ADP + phosphate + H(+). Functionally, part of the ABC transporter complex MglABC involved in galactose/methyl galactoside import. Responsible for energy coupling to the transport system. The polypeptide is Galactose/methyl galactoside import ATP-binding protein MglA (Clostridium perfringens (strain 13 / Type A)).